Here is a 395-residue protein sequence, read N- to C-terminus: MANDYLFTSESVSEGHPDKVADQISDAILDAILEQDKYSRVAAETLCNTGLVVLAGEITTTANIDYIQIARDTIKRIGYDNTDYGIDYKGCAVLVAYDKQSPDIAQGVDRAHDDNLDQGAGDQGLMFGYACDETPELMPLPIYLSHRLVERQASLRRDGRLQWLRPDAKSQVTVRYVDGKPDSIDTVVLSTQHAPDIELPALREAVIEEIIKPTLPAELIKGDIKFLVNPTGRFVIGGPQGDCGLTGRKIIVDTYGGAAPHGGGAFSGKDPSKVDRSAAYAGRYVAKNIVAAGLASRALIQVSYAIGVAEPTSVMVNTFGTGRVSDAVITKLVREHFDLRPKGIIKMLDLLRPIYEKTAAYGHFGREEPEFSWEATDKALALAEAAGVEPTARVA.

Histidine 16 provides a ligand contact to ATP. Residue aspartate 18 participates in Mg(2+) binding. Glutamate 44 contributes to the K(+) binding site. Residues glutamate 57 and glutamine 100 each contribute to the L-methionine site. A flexible loop region spans residues 100-110 (QSPDIAQGVDR). ATP is bound by residues 167-169 (DAK), 233-234 (RF), aspartate 242, 248-249 (RK), alanine 265, and lysine 269. Residue aspartate 242 participates in L-methionine binding. Lysine 273 serves as a coordination point for L-methionine.

The protein belongs to the AdoMet synthase family. In terms of assembly, homotetramer; dimer of dimers. It depends on Mg(2+) as a cofactor. Requires K(+) as cofactor.

The protein resides in the cytoplasm. The catalysed reaction is L-methionine + ATP + H2O = S-adenosyl-L-methionine + phosphate + diphosphate. The protein operates within amino-acid biosynthesis; S-adenosyl-L-methionine biosynthesis; S-adenosyl-L-methionine from L-methionine: step 1/1. In terms of biological role, catalyzes the formation of S-adenosylmethionine (AdoMet) from methionine and ATP. The overall synthetic reaction is composed of two sequential steps, AdoMet formation and the subsequent tripolyphosphate hydrolysis which occurs prior to release of AdoMet from the enzyme. This is S-adenosylmethionine synthase from Burkholderia cenocepacia (strain HI2424).